The primary structure comprises 365 residues: BTB/POZ and TAZ domain-containing protein 1 (365 aa).

The BTB domain occupies 25–96; sequence TDVEIITSGR…LYSPSVTENE (72 aa). The short motif at 193–202 is the Nuclear localization signal element; that stretch reads RKKRRRRHRR. The segment at 205–304 adopts a TAZ-type zinc-finger fold; sequence NLYLQLSEAM…SESCRVPLCR (100 aa). The segment at 315–338 is caM-binding; sequence KMVEDTKWKVLVRRVASAKAMSSL.

In terms of assembly, interacts with CUL3A. Interacts with GTE9/BET9 and GTE11/BET10 through the BTB domain. In terms of tissue distribution, preferentially expressed in young leaves, roots and stems.

It localises to the nucleus. Its subcellular location is the cytoplasm. It participates in protein modification; protein ubiquitination. In terms of biological role, may act as a substrate-specific adapter of an E3 ubiquitin-protein ligase complex (CUL3-RBX1-BTB) which mediates the ubiquitination and subsequent proteasomal degradation of target proteins. Also targeted for degradation by the 26S proteasome pathway. May be involved in gametophyte development. The chain is BTB/POZ and TAZ domain-containing protein 1 (BT1) from Arabidopsis thaliana (Mouse-ear cress).